Here is a 404-residue protein sequence, read N- to C-terminus: Probable tRNA sulfurtransferase (404 aa).

Residues 60 to 165 (RSVIEALKPV…DEAAYLSHED (106 aa)) form the THUMP domain. ATP contacts are provided by residues 183 to 184 (ML), 208 to 209 (HF), Arg-265, Gly-287, and Gln-296.

The protein belongs to the ThiI family.

Its subcellular location is the cytoplasm. The enzyme catalyses [ThiI sulfur-carrier protein]-S-sulfanyl-L-cysteine + a uridine in tRNA + 2 reduced [2Fe-2S]-[ferredoxin] + ATP + H(+) = [ThiI sulfur-carrier protein]-L-cysteine + a 4-thiouridine in tRNA + 2 oxidized [2Fe-2S]-[ferredoxin] + AMP + diphosphate. It carries out the reaction [ThiS sulfur-carrier protein]-C-terminal Gly-Gly-AMP + S-sulfanyl-L-cysteinyl-[cysteine desulfurase] + AH2 = [ThiS sulfur-carrier protein]-C-terminal-Gly-aminoethanethioate + L-cysteinyl-[cysteine desulfurase] + A + AMP + 2 H(+). It functions in the pathway cofactor biosynthesis; thiamine diphosphate biosynthesis. Its function is as follows. Catalyzes the ATP-dependent transfer of a sulfur to tRNA to produce 4-thiouridine in position 8 of tRNAs, which functions as a near-UV photosensor. Also catalyzes the transfer of sulfur to the sulfur carrier protein ThiS, forming ThiS-thiocarboxylate. This is a step in the synthesis of thiazole, in the thiamine biosynthesis pathway. The sulfur is donated as persulfide by IscS. This is Probable tRNA sulfurtransferase from Streptococcus equi subsp. zooepidemicus (strain H70).